The following is a 189-amino-acid chain: UPF0301 protein PA14_05290 (189 aa).

Belongs to the UPF0301 (AlgH) family.

This Pseudomonas aeruginosa (strain UCBPP-PA14) protein is UPF0301 protein PA14_05290.